The sequence spans 102 residues: Small ribosomal subunit protein uS10 (102 aa).

It belongs to the universal ribosomal protein uS10 family. In terms of assembly, part of the 30S ribosomal subunit.

Functionally, involved in the binding of tRNA to the ribosomes. The polypeptide is Small ribosomal subunit protein uS10 (Streptococcus pyogenes serotype M3 (strain SSI-1)).